We begin with the raw amino-acid sequence, 300 residues long: Acetyl-coenzyme A carboxylase carboxyl transferase subunit beta (300 aa).

Residues leucine 24 to alanine 293 enclose the CoA carboxyltransferase N-terminal domain. Positions 28, 31, 47, and 50 each coordinate Zn(2+). Residues cysteine 28–cysteine 50 form a C4-type zinc finger.

Belongs to the AccD/PCCB family. In terms of assembly, acetyl-CoA carboxylase is a heterohexamer composed of biotin carboxyl carrier protein (AccB), biotin carboxylase (AccC) and two subunits each of ACCase subunit alpha (AccA) and ACCase subunit beta (AccD). Zn(2+) serves as cofactor.

The protein resides in the cytoplasm. The catalysed reaction is N(6)-carboxybiotinyl-L-lysyl-[protein] + acetyl-CoA = N(6)-biotinyl-L-lysyl-[protein] + malonyl-CoA. It participates in lipid metabolism; malonyl-CoA biosynthesis; malonyl-CoA from acetyl-CoA: step 1/1. In terms of biological role, component of the acetyl coenzyme A carboxylase (ACC) complex. Biotin carboxylase (BC) catalyzes the carboxylation of biotin on its carrier protein (BCCP) and then the CO(2) group is transferred by the transcarboxylase to acetyl-CoA to form malonyl-CoA. The polypeptide is Acetyl-coenzyme A carboxylase carboxyl transferase subunit beta (Gluconacetobacter diazotrophicus (strain ATCC 49037 / DSM 5601 / CCUG 37298 / CIP 103539 / LMG 7603 / PAl5)).